Consider the following 1653-residue polypeptide: Protein strawberry notch (1653 aa).

Disordered regions lie at residues 1 to 46, 190 to 211, 237 to 265, 317 to 345, and 883 to 1043; these read MTSK…GRDL, GSPA…GGAI, GSNA…PNPG, NNQK…VKGN, and SVAD…PSGS. A compositionally biased stretch (acidic residues) spans 11–36; it reads DADDDNDNFDEDDSGSDFDDDEDPDQ. 2 positions are modified to phosphoserine: S24 and S26. The segment covering 194–205 has biased composition (polar residues); the sequence is ARSSGNAGTTGS. Residues 256–265 show a composition bias toward low complexity; it reads SPTGGIPNPG. Gly residues predominate over residues 329–342; the sequence is GSGGPAGGAPGSGV. Residues 883–901 are compositionally biased toward low complexity; it reads SVADSTSSLSNNSNITTAA. 2 positions are modified to phosphoserine: S929 and S931. Positions 966 to 975 are enriched in acidic residues; that stretch reads IDDEDEDHDV. Over residues 980–998 the composition is skewed to polar residues; that stretch reads RSVASDASSDFNPFFSGSD. Residues 1008-1027 are compositionally biased toward basic residues; sequence RSKKSKKAQKKSKKKVKKEK. Residues 1064–1125 are a coiled coil; sequence LSTQDKIQDL…RKIERLGARL (62 aa).

It belongs to the SBNO family. In terms of assembly, interacts with vg for function in the wing disk. Interacts with Su(H) for function in the eye disk. At stage 8, when the formation of the midline precursor cells depends on Notch signaling, high level of expression is seen in the midline precursor cells and a lower level in the surrounding epidermal cells. Between stages 11 and 14, expression is uniform throughout the epidermis, and at stage 16, high level of expression is restricted to the central nervous system. Expressed in the larval leg, wing and eye imaginal disks. Expression is over the wing disk and accumulates within the pleural region.

It localises to the nucleus. Notch pathway component, may contribute to the specificity between lateral and inductive Notch signaling pathways in the wing disk. Required during many developmental stages including oogenesis, embryogenesis and imaginal development of the eye, wing and leg. Ebi and sno regulate EGFR-dependent Delta transcription in the developing eye, by antagonizing a repressor function of Suppressor of Hairless (Su(H)). They are required in the R-cells for normal cone cell development. In Drosophila melanogaster (Fruit fly), this protein is Protein strawberry notch.